Reading from the N-terminus, the 208-residue chain is Probable thymidylate kinase (208 aa).

9 to 16 (GIDGAGKS) is a binding site for ATP.

The protein belongs to the thymidylate kinase family.

The enzyme catalyses dTMP + ATP = dTDP + ADP. The polypeptide is Probable thymidylate kinase (Thermococcus gammatolerans (strain DSM 15229 / JCM 11827 / EJ3)).